The sequence spans 91 residues: uncharacterized protein (91 aa).

Residues 71 to 91 (EANDRPSKKCGSGNLRVEKLV) form a disordered region.

This is an uncharacterized protein from Archaeoglobus fulgidus (strain ATCC 49558 / DSM 4304 / JCM 9628 / NBRC 100126 / VC-16).